A 279-amino-acid polypeptide reads, in one-letter code: Large ribosomal subunit protein uL2 (279 aa).

A disordered region spans residues 223–279 (TVRGSAMNPNDHPHGGGEGRSPVGMDAPRTPWGKRHMGVKTRNNKKSSTSMIVRRRK). Basic residues predominate over residues 254-267 (WGKRHMGVKTRNNK).

The protein belongs to the universal ribosomal protein uL2 family. As to quaternary structure, part of the 50S ribosomal subunit. Forms a bridge to the 30S subunit in the 70S ribosome.

Its function is as follows. One of the primary rRNA binding proteins. Required for association of the 30S and 50S subunits to form the 70S ribosome, for tRNA binding and peptide bond formation. It has been suggested to have peptidyltransferase activity; this is somewhat controversial. Makes several contacts with the 16S rRNA in the 70S ribosome. This chain is Large ribosomal subunit protein uL2, found in Ureaplasma parvum serovar 3 (strain ATCC 27815 / 27 / NCTC 11736).